Consider the following 478-residue polypeptide: Protein nucleotidyltransferase YdiU (478 aa).

ATP contacts are provided by G84, G86, R87, K107, D119, G120, R170, and R177. D246 acts as the Proton acceptor in catalysis. Mg(2+) is bound by residues N247 and D256. D256 is a binding site for ATP.

This sequence belongs to the SELO family. It depends on Mg(2+) as a cofactor. Mn(2+) serves as cofactor.

The enzyme catalyses L-seryl-[protein] + ATP = 3-O-(5'-adenylyl)-L-seryl-[protein] + diphosphate. It carries out the reaction L-threonyl-[protein] + ATP = 3-O-(5'-adenylyl)-L-threonyl-[protein] + diphosphate. The catalysed reaction is L-tyrosyl-[protein] + ATP = O-(5'-adenylyl)-L-tyrosyl-[protein] + diphosphate. It catalyses the reaction L-histidyl-[protein] + UTP = N(tele)-(5'-uridylyl)-L-histidyl-[protein] + diphosphate. The enzyme catalyses L-seryl-[protein] + UTP = O-(5'-uridylyl)-L-seryl-[protein] + diphosphate. It carries out the reaction L-tyrosyl-[protein] + UTP = O-(5'-uridylyl)-L-tyrosyl-[protein] + diphosphate. Nucleotidyltransferase involved in the post-translational modification of proteins. It can catalyze the addition of adenosine monophosphate (AMP) or uridine monophosphate (UMP) to a protein, resulting in modifications known as AMPylation and UMPylation. This Escherichia coli O17:K52:H18 (strain UMN026 / ExPEC) protein is Protein nucleotidyltransferase YdiU.